Consider the following 383-residue polypeptide: NifS-like protein (383 aa).

Residues 58-59 (SE) and 184-186 (SLN) each bind pyridoxal 5'-phosphate.

It belongs to the class-V pyridoxal-phosphate-dependent aminotransferase family. NifS/IscS subfamily. Requires pyridoxal 5'-phosphate as cofactor.

It is found in the virion. This African swine fever virus (isolate Pig/Kenya/KEN-50/1950) (ASFV) protein is NifS-like protein.